Consider the following 358-residue polypeptide: Probable undecaprenyl-phosphate N-acetylglucosaminyl 1-phosphate transferase (358 aa).

The next 11 helical transmembrane spans lie at 10 to 32, 53 to 72, 76 to 93, 105 to 127, 137 to 157, 164 to 181, 186 to 205, 218 to 235, 240 to 262, 292 to 311, and 316 to 338; these read VVAF…RIAI, MGGL…SGIY, RMTA…LGIL, FLIQ…FFSV, GWMA…AINL, LAAG…VMAL, VLIL…FLFY, GSLF…LGLY, LFSI…FAII, MSVL…AIVL, and IWLS…EVTG.

It belongs to the glycosyltransferase 4 family. Mg(2+) is required as a cofactor. Requires Mn(2+) as cofactor.

It is found in the cell membrane. The enzyme catalyses di-trans,octa-cis-undecaprenyl phosphate + UDP-N-acetyl-alpha-D-glucosamine = N-acetyl-alpha-D-glucosaminyl-di-trans,octa-cis-undecaprenyl diphosphate + UMP. It participates in cell wall biogenesis; poly(glucopyranosyl N-acetylgalactosamine 1-phosphate) teichoic acid biosynthesis. The protein operates within cell wall biogenesis; poly(glycerol phosphate) teichoic acid biosynthesis. Catalyzes the formation of undecaprenyl-PP-N-acetylglucosamine. Involved in the synthesis of anionic cell-wall polymers as it mediates the initiation of the linkage unit formation that appears to be common to the two types of teichoic acids attached to the peptidoglycan of B.subtilis; may also be involved in teichuronic acid biosynthesis. This Bacillus subtilis (strain 168) protein is Probable undecaprenyl-phosphate N-acetylglucosaminyl 1-phosphate transferase (tagO).